The following is a 37-amino-acid chain: Large ribosomal subunit protein bL36 (37 aa).

It belongs to the bacterial ribosomal protein bL36 family.

The chain is Large ribosomal subunit protein bL36 from Ureaplasma urealyticum serovar 10 (strain ATCC 33699 / Western).